Consider the following 1473-residue polypeptide: Sulfite reductase [NADPH] subunit beta (1473 aa).

The Flavodoxin-like domain maps to 728 to 876 (LTILFASDGG…AYNLWEPELW (149 aa)). Positions 1328, 1334, 1373, and 1377 each coordinate [4Fe-4S] cluster. C1377 serves as a coordination point for siroheme.

The protein belongs to the nitrite and sulfite reductase 4Fe-4S domain family. In terms of assembly, alpha(2)-beta(2). The alpha component is a flavoprotein, the beta component is a hemoprotein. Siroheme serves as cofactor. The cofactor is [4Fe-4S] cluster.

The protein resides in the cytoplasm. It carries out the reaction hydrogen sulfide + 3 NADP(+) + 3 H2O = sulfite + 3 NADPH + 4 H(+). It participates in sulfur metabolism; hydrogen sulfide biosynthesis; hydrogen sulfide from sulfite (NADPH route): step 1/1. Catalyzes the reduction of sulfite to sulfide, one of several activities required for the biosynthesis of L-cysteine from sulfate. The chain is Sulfite reductase [NADPH] subunit beta (sir1) from Schizosaccharomyces pombe (strain 972 / ATCC 24843) (Fission yeast).